Consider the following 325-residue polypeptide: Putative gluconeogenesis factor (325 aa).

Belongs to the gluconeogenesis factor family.

The protein resides in the cytoplasm. In terms of biological role, required for morphogenesis under gluconeogenic growth conditions. This is Putative gluconeogenesis factor from Streptococcus pyogenes serotype M1.